Here is a 401-residue protein sequence, read N- to C-terminus: Methionine import ATP-binding protein MetN (401 aa).

The region spanning 6 to 248 (ITFDHVVKEF…PQQPVTKRFI (243 aa)) is the ABC transporter domain. 45–52 (GYSGAGKS) is a binding site for ATP.

It belongs to the ABC transporter superfamily. Methionine importer (TC 3.A.1.24) family. In terms of assembly, the complex is composed of two ATP-binding proteins (MetN), two transmembrane proteins (MetI) and a solute-binding protein (MetQ).

The protein resides in the cell membrane. The catalysed reaction is L-methionine(out) + ATP + H2O = L-methionine(in) + ADP + phosphate + H(+). It catalyses the reaction D-methionine(out) + ATP + H2O = D-methionine(in) + ADP + phosphate + H(+). Part of the ABC transporter complex MetNIQ involved in methionine import. Responsible for energy coupling to the transport system. The sequence is that of Methionine import ATP-binding protein MetN from Bifidobacterium longum (strain NCC 2705).